The chain runs to 349 residues: MQTYGNPDVTYGWWAGNAGVTNKSGKFIAAHIAHTGLIAFAAGGSTLWELARYNPEIPMGHQSSIFLAHLASIGIGFDEAGAWTGAGVASIAIVHLVLSMVYGAGGLLHSVLFVGDMQDSEVPQARKFKLEWDNPDNQTFILGHHLLFFGVACIWFVEWARIHGIYDPAIGAVRQVEYNLNLTSIWNHQFDFLAIDSLEDVLGGHAFLAFLEITGGAFHIATKQVGEYTKFKGAGLLSAEAILSFSCAGLGWMAVVAAFWCAQNTTVYPEAWYGEALILKFGIAPYWIDSVDLSGGPAFFGHTTRAALANVHYYFGFFFLQGHLWHALRAMGFDFKRILKEPLPAQLYE.

6 helical membrane passes run 27–47, 65–85, 88–108, 201–221, 241–261, and 308–328; these read FIAA…GSTL, IFLA…AWTG, VASI…GGLL, VLGG…FHIA, AILS…AFWC, and LANV…WHAL.

Belongs to the PsbB/PsbC family. IsiA/Pcb subfamily. The antenna complex consists of divinyl chlorophylls (a and b) and divinyl chlorophyll a/b binding proteins and binds more divinyl chlorophyll b than does the antenna complex from high-light-adapted Prochlorococcus. The cofactor is divinyl chlorophyll a. Requires divinyl chlorophyll b as cofactor.

The protein resides in the cellular thylakoid membrane. Its function is as follows. The antenna complex functions as a light receptor, it captures and delivers excitation energy to photosystems II and I. The Prochlorales pcb genes are not related to higher plant LHCs. This chain is Divinyl chlorophyll a/b light-harvesting protein PcbE (pcbE), found in Prochlorococcus marinus (strain NATL2A).